A 429-amino-acid chain; its full sequence is tRNA modification GTPase MnmE (429 aa).

(6S)-5-formyl-5,6,7,8-tetrahydrofolate-binding residues include arginine 20, glutamate 77, and arginine 117. Positions 213–353 (GFEVAILGAP…LVKAVSHRLS (141 aa)) constitute a TrmE-type G domain. Asparagine 223 contributes to the K(+) binding site. GTP contacts are provided by residues 223-228 (NVGKSS), 242-248 (SSIAGTT), and 267-270 (DTAG). Serine 227 contributes to the Mg(2+) binding site. Positions 242, 244, and 247 each coordinate K(+). Mg(2+) is bound at residue threonine 248. (6S)-5-formyl-5,6,7,8-tetrahydrofolate is bound at residue lysine 429.

The protein belongs to the TRAFAC class TrmE-Era-EngA-EngB-Septin-like GTPase superfamily. TrmE GTPase family. Homodimer. Heterotetramer of two MnmE and two MnmG subunits. The cofactor is K(+).

It is found in the cytoplasm. Exhibits a very high intrinsic GTPase hydrolysis rate. Involved in the addition of a carboxymethylaminomethyl (cmnm) group at the wobble position (U34) of certain tRNAs, forming tRNA-cmnm(5)s(2)U34. The polypeptide is tRNA modification GTPase MnmE (Dinoroseobacter shibae (strain DSM 16493 / NCIMB 14021 / DFL 12)).